The chain runs to 223 residues: Ubiquitin-conjugating enzyme E2 S (223 aa).

Position 1 is an N-acetylmethionine (Met-1). The 147-residue stretch at 11–157 (HIIRLVYKEV…ARLLTEIHGG (147 aa)) folds into the UBC core domain. Catalysis depends on Cys-95, which acts as the Glycyl thioester intermediate. Residues 155-223 (HGGAGGPSGG…TDKKRALRRL (69 aa)) form a disordered region. The span at 169 to 195 (GRATASGAAASTADPTAPGGPAGAEGP) shows a compositional bias: low complexity. At Ser-174 the chain carries Phosphoserine. Residues 209–223 (AAKKKTDKKRALRRL) show a composition bias toward basic residues.

This sequence belongs to the ubiquitin-conjugating enzyme family. In terms of assembly, component of the APC/C complex, composed of at least 14 distinct subunits that assemble into a complex of at least 19 chains with a combined molecular mass of around 1.2 MDa. Within this complex, directly interacts with ANAPC2 and ANAPC4. Interacts with CDC20, FZR1/CDH1 and VHL. In terms of processing, autoubiquitinated by the APC/C complex during G1, leading to its degradation by the proteasome.

It carries out the reaction S-ubiquitinyl-[E1 ubiquitin-activating enzyme]-L-cysteine + [E2 ubiquitin-conjugating enzyme]-L-cysteine = [E1 ubiquitin-activating enzyme]-L-cysteine + S-ubiquitinyl-[E2 ubiquitin-conjugating enzyme]-L-cysteine.. It functions in the pathway protein modification; protein ubiquitination. Functionally, accepts ubiquitin from the E1 complex and catalyzes its covalent attachment to other proteins. Catalyzes 'Lys-11'-linked polyubiquitination. Acts as an essential factor of the anaphase promoting complex/cyclosome (APC/C), a cell cycle-regulated ubiquitin ligase that controls progression through mitosis. Acts by specifically elongating 'Lys-11'-linked polyubiquitin chains initiated by the E2 enzyme UBE2C/UBCH10 on APC/C substrates, enhancing the degradation of APC/C substrates by the proteasome and promoting mitotic exit. Also acts by elongating ubiquitin chains initiated by the E2 enzyme UBE2D1/UBCH5 in vitro; it is however unclear whether UBE2D1/UBCH5 acts as an E2 enzyme for the APC/C in vivo. Also involved in ubiquitination and subsequent degradation of VHL, resulting in an accumulation of HIF1A. In vitro able to promote polyubiquitination using all 7 ubiquitin Lys residues, except 'Lys-48'-linked polyubiquitination. The chain is Ubiquitin-conjugating enzyme E2 S (UBE2S) from Bos taurus (Bovine).